A 314-amino-acid chain; its full sequence is Tetraacyldisaccharide 4'-kinase (314 aa).

Position 61-68 (61-68) interacts with ATP; that stretch reads IVGGSGKT.

The protein belongs to the LpxK family.

The catalysed reaction is a lipid A disaccharide + ATP = a lipid IVA + ADP + H(+). It functions in the pathway glycolipid biosynthesis; lipid IV(A) biosynthesis; lipid IV(A) from (3R)-3-hydroxytetradecanoyl-[acyl-carrier-protein] and UDP-N-acetyl-alpha-D-glucosamine: step 6/6. Functionally, transfers the gamma-phosphate of ATP to the 4'-position of a tetraacyldisaccharide 1-phosphate intermediate (termed DS-1-P) to form tetraacyldisaccharide 1,4'-bis-phosphate (lipid IVA). The protein is Tetraacyldisaccharide 4'-kinase of Aliarcobacter butzleri (strain RM4018) (Arcobacter butzleri).